The following is a 358-amino-acid chain: MPFLGQDWRSPGWSWIKTEDGWKRCESCSQKLERENNHCNISHSIILNSEDGEIFNNEEHEYASKKRKKDHFRNDTNTQSFYREKWIYVHKESTKERHGYCTLGEAFNRLDFSSAIQDIRRFNYVVKLLQLIAKSQLTSLSGVAQKNYFNILDKIVQKVLDDHHNPRLIKDLLQDLSSTLCILIRGVGKSVLVGNINIWICRLETILAWQQQLQDLQMTKQVNNGLTLSDLPLHMLNNILYRFSDGWDIITLGQVTPTLYMLSEDRQLWKKLCQYHFAEKQFCRHLILSEKGHIEWKLMYFALQKHYPAKEQYGDTLHFCRHCSILFWKDSGHPCTAADPDSCFTPVSPQHFIDLFKF.

Positions 1-83 (MPFLGQDWRS…NDTNTQSFYR (83 aa)) are interaction with beta-actin. An F-box domain is found at 226-274 (LTLSDLPLHMLNNILYRFSDGWDIITLGQVTPTLYMLSEDRQLWKKLCQ).

Part of a SCF (SKP1-cullin-F-box) protein ligase complex consisting of FBXO25, SKP1, CUL1 and RBX1. Interacts directly with SKP1 and CUL1. Interacts (via C-terminus) with beta-actin (via N-terminus).

The protein resides in the nucleus. Its pathway is protein modification; protein ubiquitination. Substrate-recognition component of the SCF (SKP1-CUL1-F-box protein)-type E3 ubiquitin ligase complex. May play a role in accumulation of expanded polyglutamine (polyQ) protein huntingtin (HTT). In Macaca fascicularis (Crab-eating macaque), this protein is F-box only protein 25 (FBXO25).